A 649-amino-acid polypeptide reads, in one-letter code: Microtubule-associated protein VP6 (649 aa).

It localises to the virion. The protein localises to the host cytoplasm. The protein resides in the host cytoskeleton. In terms of biological role, minor inner capsid component. Displays NTPase and RNA 5'-triphosphatase (RTPase) activities. May function as a cofactor of polymerase VP2. Associates with microtubules and plays a role in the formation, structural organization and morphology of viral inclusions, where the assembly of cores and the replication of viral RNA occur. The protein is Microtubule-associated protein VP6 (S6) of Cryphonectria parasitica (Chestnut blight fungus).